The chain runs to 200 residues: dITP/XTP pyrophosphatase (200 aa).

5–10 (TRNEGK) contributes to the substrate binding site. D67 (proton acceptor) is an active-site residue. Residue D67 participates in Mg(2+) binding. Residues S68, 151 to 154 (FGYD), K174, and 179 to 180 (HR) each bind substrate.

The protein belongs to the HAM1 NTPase family. In terms of assembly, homodimer. It depends on Mg(2+) as a cofactor.

The enzyme catalyses XTP + H2O = XMP + diphosphate + H(+). It carries out the reaction dITP + H2O = dIMP + diphosphate + H(+). It catalyses the reaction ITP + H2O = IMP + diphosphate + H(+). Pyrophosphatase that catalyzes the hydrolysis of nucleoside triphosphates to their monophosphate derivatives, with a high preference for the non-canonical purine nucleotides XTP (xanthosine triphosphate), dITP (deoxyinosine triphosphate) and ITP. Seems to function as a house-cleaning enzyme that removes non-canonical purine nucleotides from the nucleotide pool, thus preventing their incorporation into DNA/RNA and avoiding chromosomal lesions. The protein is dITP/XTP pyrophosphatase of Streptococcus pneumoniae serotype 4 (strain ATCC BAA-334 / TIGR4).